Consider the following 241-residue polypeptide: Uridylate kinase (241 aa).

15–18 serves as a coordination point for ATP; sequence KMSG. The segment at 23 to 28 is involved in allosteric activation by GTP; that stretch reads GAEGFG. Gly-57 contacts UMP. Residues Gly-58 and Arg-62 each contribute to the ATP site. Residues Asp-77 and 138-145 each bind UMP; that span reads TGNPLFTT. Residues Thr-165, Phe-171, and Asp-174 each contribute to the ATP site.

This sequence belongs to the UMP kinase family. In terms of assembly, homohexamer.

The protein resides in the cytoplasm. It carries out the reaction UMP + ATP = UDP + ADP. The protein operates within pyrimidine metabolism; CTP biosynthesis via de novo pathway; UDP from UMP (UMPK route): step 1/1. Its activity is regulated as follows. Allosterically activated by GTP. Inhibited by UTP. Catalyzes the reversible phosphorylation of UMP to UDP. The protein is Uridylate kinase of Blochmanniella pennsylvanica (strain BPEN).